The following is a 76-amino-acid chain: Small ribosomal subunit protein bS18 (76 aa).

The protein belongs to the bacterial ribosomal protein bS18 family. Part of the 30S ribosomal subunit. Forms a tight heterodimer with protein bS6.

Functionally, binds as a heterodimer with protein bS6 to the central domain of the 16S rRNA, where it helps stabilize the platform of the 30S subunit. This chain is Small ribosomal subunit protein bS18, found in Ectopseudomonas mendocina (strain ymp) (Pseudomonas mendocina).